Consider the following 659-residue polypeptide: MALVTVSRSPPGSGASTPVGPWDQAVQRRSRLQRRQSFAVLRGAVLGLQDGGDNDDAAEASSEPTEKAPSEEELHGDQTDFGQGSQSPQKQEEQRQHLHLMVQLLRPQDDIRLAAQLEAPRPPRLRYLLVVSTREGEGLSQDETVLLGVDFPDSSSPSCTLGLVLPLWSDTQVYLDGDGGFSVTSGGQSRIFKPISIQTMWATLQVLHQACEAALGSGLVPGGSALTWASHYQERLNSEQSCLNEWTAMADLESLRPPSAEPGGSSEQEQMEQAIRAELWKVLDVSDLESVTSKEIRQALELRLGLPLQQYRDFIDNQMLLLVAQRDRASRIFPHLYLGSEWNAANLEELQRNRVTHILNMAREIDNFYPERFTYHNVRLWDEESAQLLPHWKETHRFIEAARAQGTHVLVHCKMGVSRSAATVLAYAMKQYECSLEQALRHVQELRPIARPNPGFLRQLQIYQGILTASRQSHVWEQKVGGVSPEEHPAPEVSTPFPPLPPEPEGGGEEKVVGMEESQAAPKEEPGPRPRINLRGVMRSISLLEPSLELESTSETSDMPEVFSSHESSHEEPLQPFPQLARTKGGQQVDRGPQPALKSRQSVVTLQGSAVVANRTQAFQEQEQGQGQGQGEPCISSTPRFRKVVRQASVHDSGEEGEA.

Residues 1–16 (MALVTVSRSPPGSGAS) are compositionally biased toward polar residues. The tract at residues 1–31 (MALVTVSRSPPGSGASTPVGPWDQAVQRRSR) is disordered. Ala-2 is modified (N-acetylalanine). Residues Ser-9 and Ser-37 each carry the phosphoserine modification. Residues 46 to 96 (LGLQDGGDNDDAAEASSEPTEKAPSEEELHGDQTDFGQGSQSPQKQEEQRQ) form a disordered region. Basic and acidic residues predominate over residues 64-78 (PTEKAPSEEELHGDQ). The segment covering 80 to 89 (DFGQGSQSPQ) has biased composition (polar residues). Phosphoserine is present on residues Ser-85 and Ser-87. One can recognise a DEK-C domain in the interval 269-324 (EQMEQAIRAELWKVLDVSDLESVTSKEIRQALELRLGLPLQQYRDFIDNQMLLLVA). Residues 328–469 (RASRIFPHLY…LQIYQGILTA (142 aa)) enclose the Tyrosine-protein phosphatase domain. Cys-413 (phosphocysteine intermediate) is an active-site residue. Disordered regions lie at residues 482-534 (GVSP…RINL), 547-603 (SLEL…RQSV), and 617-638 (QAFQ…ISST). The segment covering 547 to 557 (SLELESTSETS) has biased composition (low complexity).

This sequence belongs to the protein-tyrosine phosphatase family. As to quaternary structure, does not bind to, or colocalize with, filamentous actin.

The protein resides in the cytoplasm. It is found in the cytoskeleton. It localises to the nucleus. It catalyses the reaction O-phospho-L-tyrosyl-[protein] + H2O = L-tyrosyl-[protein] + phosphate. The enzyme catalyses O-phospho-L-seryl-[protein] + H2O = L-seryl-[protein] + phosphate. The catalysed reaction is O-phospho-L-threonyl-[protein] + H2O = L-threonyl-[protein] + phosphate. In terms of biological role, protein phosphatase which may play a role in the regulation of actin filament dynamics. Can dephosphorylate and activate the actin binding/depolymerizing factor cofilin, which subsequently binds to actin filaments and stimulates their disassembly. The chain is Protein phosphatase Slingshot homolog 3 (SSH3) from Homo sapiens (Human).